We begin with the raw amino-acid sequence, 241 residues long: 1-(5-phosphoribosyl)-5-[(5-phosphoribosylamino)methylideneamino] imidazole-4-carboxamide isomerase (241 aa).

D10 (proton acceptor) is an active-site residue. Catalysis depends on D131, which acts as the Proton donor.

The protein belongs to the HisA/HisF family.

Its subcellular location is the cytoplasm. It catalyses the reaction 1-(5-phospho-beta-D-ribosyl)-5-[(5-phospho-beta-D-ribosylamino)methylideneamino]imidazole-4-carboxamide = 5-[(5-phospho-1-deoxy-D-ribulos-1-ylimino)methylamino]-1-(5-phospho-beta-D-ribosyl)imidazole-4-carboxamide. Its pathway is amino-acid biosynthesis; L-histidine biosynthesis; L-histidine from 5-phospho-alpha-D-ribose 1-diphosphate: step 4/9. The sequence is that of 1-(5-phosphoribosyl)-5-[(5-phosphoribosylamino)methylideneamino] imidazole-4-carboxamide isomerase from Bifidobacterium longum (strain DJO10A).